The primary structure comprises 270 residues: Diaminopimelate epimerase (270 aa).

3 residues coordinate substrate: Asn-15, Gln-49, and Asn-66. The active-site Proton donor is the Cys-75. Residues 76–77 (GN), Asn-155, Asn-187, and 204–205 (ER) contribute to the substrate site. Cys-213 (proton acceptor) is an active-site residue. 214-215 (GS) contacts substrate.

It belongs to the diaminopimelate epimerase family. In terms of assembly, homodimer.

The protein localises to the cytoplasm. It catalyses the reaction (2S,6S)-2,6-diaminopimelate = meso-2,6-diaminopimelate. Its pathway is amino-acid biosynthesis; L-lysine biosynthesis via DAP pathway; DL-2,6-diaminopimelate from LL-2,6-diaminopimelate: step 1/1. Functionally, catalyzes the stereoinversion of LL-2,6-diaminopimelate (L,L-DAP) to meso-diaminopimelate (meso-DAP), a precursor of L-lysine and an essential component of the bacterial peptidoglycan. This chain is Diaminopimelate epimerase, found in Rickettsia conorii (strain ATCC VR-613 / Malish 7).